A 334-amino-acid chain; its full sequence is MYSVSIIGASGYSGAELTRLLLRHPGVELQELYAFSQAGKAVSELYPLLSSDKVYKPYGGECESDVYFLALPHGEALQLVPPLVKAGKTVIDLSGDFRLKSTVEHEQFYKQQKSPEAVMTYGMSELFREEIIKAKAISNPGCFATSIILGVAPLLLGNDSSINVRGINCTSTSGISGAGRSSKTELSFSEMSENIRAYKVGLHQHIPEIMQTLGTSVTTPSFDFTFTPMIGSLVRGIYSILTVNLENPAEAEQIKALYKEFYKEAPFVRVRDTMTEVRHVAHTNFCDIHIAHATANGTLIIVTAIDNLLKGAAGQAIQNMNLMLGMNEKTGLSF.

Cys-142 is a catalytic residue.

This sequence belongs to the NAGSA dehydrogenase family. Type 1 subfamily.

It localises to the cytoplasm. The enzyme catalyses N-acetyl-L-glutamate 5-semialdehyde + phosphate + NADP(+) = N-acetyl-L-glutamyl 5-phosphate + NADPH + H(+). It participates in amino-acid biosynthesis; L-arginine biosynthesis; N(2)-acetyl-L-ornithine from L-glutamate: step 3/4. Catalyzes the NADPH-dependent reduction of N-acetyl-5-glutamyl phosphate to yield N-acetyl-L-glutamate 5-semialdehyde. The polypeptide is N-acetyl-gamma-glutamyl-phosphate reductase (Pelodictyon phaeoclathratiforme (strain DSM 5477 / BU-1)).